The chain runs to 1088 residues: RNA-directed RNA polymerase (1088 aa).

A RdRp catalytic domain is found at 501–687 (LSYGDVTRFL…AKRYIAGGKI (187 aa)).

The protein belongs to the reoviridae RNA-directed RNA polymerase family. In terms of assembly, interacts with VP3 (Potential). Interacts with VP2; this interaction activates VP1. Interacts with NSP5; this interaction is probably necessary for the formation of functional virus factories. Interacts with NSP2; this interaction is weak. Mg(2+) serves as cofactor.

It is found in the virion. The enzyme catalyses RNA(n) + a ribonucleoside 5'-triphosphate = RNA(n+1) + diphosphate. Functionally, RNA-directed RNA polymerase that is involved in both transcription and genome replication. Together with VP3 capping enzyme, forms an enzyme complex positioned near the channels situated at each of the five-fold vertices of the core. Following infection, the outermost layer of the virus is lost, leaving a double-layered particle (DLP) made up of the core and VP6 shell. VP1 then catalyzes the transcription of fully conservative plus-strand genomic RNAs that are extruded through the DLP's channels into the cytoplasm where they function as mRNAs for translation of viral proteins. One copy of each of the viral (+)RNAs is also recruited during core assembly, together with newly synthesized polymerase complexes and VP2. The polymerase of these novo-formed particles catalyzes the synthesis of complementary minus-strands leading to dsRNA formation. To do so, the polymerase specifically recognizes and binds 4 bases 5'-UGUG-3' in the conserved 3'-sequence of plus-strand RNA templates. VP2 presumably activates the autoinhibited VP1-RNA complex to coordinate packaging and genome replication. Once dsRNA synthesis is complete, the polymerase switches to the transcriptional mode, thus providing secondary transcription. In Rotavirus A (strain RVA/Human/Philippines/L26/1987/G12P1B[4]) (RV-A), this protein is RNA-directed RNA polymerase.